The sequence spans 247 residues: PABIR family member 2 (247 aa).

The disordered stretch occupies residues 1–23; sequence MAQEKMELDLEPDTSYGGTLRRS. Alanine 2 carries the N-acetylalanine modification. Residues serine 25, serine 33, serine 50, serine 58, and leucine 63 each carry the phosphoserine modification. Positions 82 to 104 are disordered; that stretch reads ISQSWDESLSLSDSDFDKPEKLY. Residues 83 to 94 show a composition bias toward low complexity; sequence SQSWDESLSLSD. Threonine 112 carries the phosphothreonine modification. 2 positions are modified to phosphoserine: serine 115 and serine 119. Residue arginine 122 is modified to Omega-N-methylarginine. 3 disordered regions span residues 129-152, 158-177, and 202-230; these read VSSS…SQSP, PSVL…SQPK, and DILD…SPVA. Phosphoserine is present on residues serine 137 and serine 141. Residues 166–176 are compositionally biased toward basic and acidic residues; the sequence is RKGEMETESQP. A compositionally biased stretch (low complexity) spans 202–216; that stretch reads DILDGSSSSSGLSSD.

The protein belongs to the FAM122 family. Post-translationally, isoform 3 and isoform 4 are phosphorylated on Ser-62 and Ser-64.

This chain is PABIR family member 2, found in Homo sapiens (Human).